The sequence spans 947 residues: Serine-aspartate repeat-containing protein C (947 aa).

The N-terminal stretch at 1–50 is a signal peptide; the sequence is MNNKKTATNRKGMIPNRLNKFSIRKYSVGTASILVGTTLIFGLSGHEAKA. Positions 51-164 are disordered; it reads AEHTNGELNQ…STTPKTTTIK (114 aa). The ligand binding A region stretch occupies residues 51-495; sequence AEHTNGELNQ…GSSTANGDQK (445 aa). Residues 56-71 show a composition bias toward polar residues; that stretch reads GELNQSKNETTAPSEN. Residues 72–83 show a composition bias toward basic and acidic residues; that stretch reads KTTKKVDSRQLK. A compositionally biased stretch (polar residues) spans 84–155; sequence DNTQTATADQ…SNLTQAKDVS (72 aa). CNA-B domains are found at residues 496-606 and 607-717; these read KYNL…YKTP and KYSL…EEET. The segment at 678 to 927 is disordered; sequence TQTGTNTTED…NNSNNGTLFG (250 aa). Composition is skewed to acidic residues over residues 685–695 and 712–886; these read TEDDKDADGGE and YYEE…DSDS. The short motif at 910-914 is the LPXTG sorting signal element; that stretch reads LPETG. Over residues 912-927 the composition is skewed to low complexity; sequence ETGSENNNSNNGTLFG. Thr-913 carries the pentaglycyl murein peptidoglycan amidated threonine modification. Positions 914-947 are cleaved as a propeptide — removed by sortase; that stretch reads GSENNNSNNGTLFGGLFAALGSLLLFGRRKKQNK.

Belongs to the serine-aspartate repeat-containing protein (SDr) family. Homodimerizes; via N2-Domain. Interacts with host NRXN1; this interaction mediates bacterial attachment to host cells.

The protein localises to the secreted. It is found in the cell wall. Functionally, cell surface-associated calcium-binding protein which plays an important role in adhesion and pathogenesis. Mediates interactions with components of the extracellular matrix such as host NRXN1 to promote bacterial adhesion. This chain is Serine-aspartate repeat-containing protein C (sdrC), found in Staphylococcus aureus (strain USA300).